A 412-amino-acid polypeptide reads, in one-letter code: Argininosuccinate synthase (412 aa).

ATP contacts are provided by residues 16 to 24 (AYSGGLDTS) and alanine 44. L-citrulline-binding residues include tyrosine 96 and serine 101. Residue glycine 126 participates in ATP binding. L-aspartate is bound by residues threonine 128, asparagine 132, and aspartate 133. Asparagine 132 contributes to the L-citrulline binding site. L-citrulline contacts are provided by arginine 136, serine 185, serine 194, glutamate 270, and tyrosine 282.

Belongs to the argininosuccinate synthase family. Type 1 subfamily. In terms of assembly, homotetramer.

The protein resides in the cytoplasm. The enzyme catalyses L-citrulline + L-aspartate + ATP = 2-(N(omega)-L-arginino)succinate + AMP + diphosphate + H(+). It participates in amino-acid biosynthesis; L-arginine biosynthesis; L-arginine from L-ornithine and carbamoyl phosphate: step 2/3. This Shewanella baltica (strain OS185) protein is Argininosuccinate synthase.